Consider the following 447-residue polypeptide: Na(+)-translocating NADH-quinone reductase subunit A (447 aa).

It belongs to the NqrA family. As to quaternary structure, composed of six subunits; NqrA, NqrB, NqrC, NqrD, NqrE and NqrF.

The enzyme catalyses a ubiquinone + n Na(+)(in) + NADH + H(+) = a ubiquinol + n Na(+)(out) + NAD(+). In terms of biological role, NQR complex catalyzes the reduction of ubiquinone-1 to ubiquinol by two successive reactions, coupled with the transport of Na(+) ions from the cytoplasm to the periplasm. NqrA to NqrE are probably involved in the second step, the conversion of ubisemiquinone to ubiquinol. This is Na(+)-translocating NADH-quinone reductase subunit A from Hahella chejuensis (strain KCTC 2396).